A 526-amino-acid chain; its full sequence is Cholesterol side-chain cleavage enzyme, mitochondrial (526 aa).

The transit peptide at 1 to 36 (MLAKGLSLRSVLVKGCQPFLSPTWQGPVLSTGKGAG) directs the protein to the mitochondrion. Over residues 30–41 (STGKGAGTSTSS) the composition is skewed to low complexity. The segment at 30-49 (STGKGAGTSTSSPRSFNEIP) is disordered. A heme-binding site is contributed by Cys-458.

It belongs to the cytochrome P450 family. Interacts with FDX1/adrenodoxin. It depends on heme as a cofactor.

It is found in the mitochondrion inner membrane. The catalysed reaction is 6 reduced [adrenodoxin] + cholesterol + 3 O2 + 6 H(+) = 4-methylpentanal + pregnenolone + 6 oxidized [adrenodoxin] + 4 H2O. It catalyses the reaction 2 reduced [adrenodoxin] + cholesterol + O2 + 2 H(+) = (22R)-hydroxycholesterol + 2 oxidized [adrenodoxin] + H2O. The enzyme catalyses (22R)-hydroxycholesterol + 2 reduced [adrenodoxin] + O2 + 2 H(+) = (20R,22R)-20,22-dihydroxycholesterol + 2 oxidized [adrenodoxin] + H2O. It carries out the reaction (20R,22R)-20,22-dihydroxycholesterol + 2 reduced [adrenodoxin] + O2 + 2 H(+) = 4-methylpentanal + pregnenolone + 2 oxidized [adrenodoxin] + 2 H2O. The protein operates within lipid metabolism; C21-steroid hormone metabolism. Its pathway is steroid metabolism; cholesterol metabolism. In terms of biological role, a cytochrome P450 monooxygenase that catalyzes the side-chain hydroxylation and cleavage of cholesterol to pregnenolone, the precursor of most steroid hormones. Catalyzes three sequential oxidation reactions of cholesterol, namely the hydroxylation at C22 followed with the hydroxylation at C20 to yield 20R,22R-hydroxycholesterol that is further cleaved between C20 and C22 to yield the C21-steroid pregnenolone and 4-methylpentanal. Mechanistically, uses molecular oxygen inserting one oxygen atom into a substrate and reducing the second into a water molecule. Two electrons are provided by NADPH via a two-protein mitochondrial transfer system comprising flavoprotein FDXR (adrenodoxin/ferredoxin reductase) and nonheme iron-sulfur protein FDX1 or FDX2 (adrenodoxin/ferredoxin). This is Cholesterol side-chain cleavage enzyme, mitochondrial from Mus musculus (Mouse).